Reading from the N-terminus, the 735-residue chain is E3 UFM1-protein ligase 1 homolog (735 aa).

Residues 389-445 (RLEAEKKKQGGAKAAVKVQEETDDWGDGKKGGKGGKKNAKSVKGGSKSSAPSTSSNL) are disordered. Residues 419-428 (GGKGGKKNAK) are compositionally biased toward basic residues. Residues 429–445 (SVKGGSKSSAPSTSSNL) show a composition bias toward low complexity.

This sequence belongs to the UFL1 family.

Functionally, E3 UFM1-protein ligase that mediates ufmylation of target proteins. This Caenorhabditis elegans protein is E3 UFM1-protein ligase 1 homolog (ufl-1).